The following is a 925-amino-acid chain: Aspulvinone E synthetase melA (925 aa).

The segment at 11–434 is adenylation (A) domain; sequence ETAAARNGDG…GGRAKETIII (424 aa). The region spanning 564 to 644 is the Carrier domain; that stretch reads SPKNDFEKGL…ELAAALDNLY (81 aa). Residue Ser-601 is modified to O-(pantetheine 4'-phosphoryl)serine. The interval 663-923 is thioesterase (TE) domain; it reads PLWLVHPGAG…KILRSALAER (261 aa).

This sequence belongs to the NRP synthetase family.

The protein localises to the cytoplasm. It carries out the reaction 2 3-(4-hydroxyphenyl)pyruvate + AH2 + 2 ATP + O2 = aspulvinone E + A + 2 AMP + CO2 + 2 diphosphate + H2O + H(+). Its function is as follows. Nonribosomal peptide synthase; part of the gene cluster that mediates the biosynthesis of Asp-melanin, a pigment that confers resistance against UV light and hampers phagocytosis by soil amoeba. The nonribosomal peptide synthase melA converts 4-hydroxyphenylpyruvate (4-HPPA) to aspulvinone E. The tyrosinase tyrP then performs hydroxylations of both aromatic moieties of aspulvinone E. The product of tyrP is highly unstable, and, due to the high reactivity of methides and ortho-diquinones, the polymeric Asp-melanin forms spontaneously. The chain is Aspulvinone E synthetase melA from Aspergillus terreus (strain NIH 2624 / FGSC A1156).